The sequence spans 241 residues: Demethylmenaquinone methyltransferase (241 aa).

S-adenosyl-L-methionine is bound by residues T60, D81, and 106 to 107; that span reads DA.

The protein belongs to the class I-like SAM-binding methyltransferase superfamily. MenG/UbiE family.

It carries out the reaction a 2-demethylmenaquinol + S-adenosyl-L-methionine = a menaquinol + S-adenosyl-L-homocysteine + H(+). The protein operates within quinol/quinone metabolism; menaquinone biosynthesis; menaquinol from 1,4-dihydroxy-2-naphthoate: step 2/2. Methyltransferase required for the conversion of demethylmenaquinol (DMKH2) to menaquinol (MKH2). The chain is Demethylmenaquinone methyltransferase from Staphylococcus epidermidis (strain ATCC 35984 / DSM 28319 / BCRC 17069 / CCUG 31568 / BM 3577 / RP62A).